Consider the following 340-residue polypeptide: MEFDAVLLLSFGGPEGPEQVRPFLENVTRGRGVPPERLDAVAEHYMHFGGVSPINGINRALVTELRAEVGLPVYFGNRNWEPYVEDTVMAMRDNGVKRAAVFATSAWSGYSGCTQYVEDIARARRAAGPDAPELVKLRSYFDHPLFVEMFADAIAAAAATVPKGARLVFTAHSIPVAADRRCGPGLYSRQVAYAASLVAAAAGYDDYDLAWQSRSGPPQVPWLEPDVADHLEMLRAGGVKAVIVCPIGFVADHIEVVWDLDAELRAQAQDAGIALARAATPNADRRFARLARGLIEELRSGGEPARVGGPDSVSGCLAGVNGEPCRPPHCAARETAPQGA.

Fe-coproporphyrin III is bound by residues serine 52 and tyrosine 116. Residues histidine 172 and glutamate 255 each contribute to the Fe(2+) site.

Belongs to the ferrochelatase family.

It localises to the cytoplasm. It catalyses the reaction Fe-coproporphyrin III + 2 H(+) = coproporphyrin III + Fe(2+). The protein operates within porphyrin-containing compound metabolism; protoheme biosynthesis. Involved in coproporphyrin-dependent heme b biosynthesis. Catalyzes the insertion of ferrous iron into coproporphyrin III to form Fe-coproporphyrin III. The chain is Coproporphyrin III ferrochelatase from Mycobacterium ulcerans (strain Agy99).